A 176-amino-acid chain; its full sequence is Prepronociceptin (176 aa).

Positions 1–19 are cleaved as a signal peptide; sequence MKILFCDLLLLSLFSSVSS. 2 consecutive propeptides follow at residues 20–95 and 169–176; these read SCQK…MQHL and TLHQNGNA.

The protein belongs to the opioid neuropeptide precursor family. Specific enzymatic cleavages at paired basic residues probably yield other active peptides besides nociceptin. Post-translationally, the N-terminal domain contains 6 conserved cysteines thought to be involved in disulfide bonding and/or processing.

The protein localises to the secreted. Its function is as follows. Ligand of the opioid receptor-like receptor OPRL1. It may act as a transmitter in the brain by modulating nociceptive and locomotor behavior. May be involved in neuronal differentiation and development. In terms of biological role, blocks nociceptin action in pain transmission by inhibiting nociceptin-induced hyperalgesia and allodynia. Functionally, has potent analgesic activity. This is Prepronociceptin (PNOC) from Bos taurus (Bovine).